Consider the following 647-residue polypeptide: Cartilage acidic protein 1 (647 aa).

A signal peptide spans 1–30 (MMLPADFFVPVSKMMLLALLLSIIICCGGA). The FG-GAP 1; atypical repeat unit spans residues 48-90 (DYDSNPTQLNYGVAITDVDNDGDFEVVVAGYNGPNLVLKYIKE). The stretch at 107–149 (YALRDRQGNAIGVAACDIDGDGREEIYFLNTNNAFSGIATYSD) is one FG-GAP 2; atypical repeat. An FG-GAP 3; atypical repeat occupies 285–335 (TGVDDVYQHGRGVALADFNRDGKVDIVYGNWNGPHRLFLQMNTNGKVRFRD). The stretch at 397 to 439 (GDASEPDGRGTGGAVTDFDGDGMLDLILSHGESMAQPLSVFKG) is one FG-GAP 4; atypical repeat. The region spanning 561–607 (DTDECIQFPFVCPREKPVCINTYGGYKCRPNRRCSRGFEPNEDGTAC) is the EGF-like domain. 3 disulfides stabilise this stretch: Cys565–Cys579, Cys572–Cys588, and Cys594–Cys607.

Its subcellular location is the secreted. It localises to the extracellular space. The protein localises to the extracellular matrix. This chain is Cartilage acidic protein 1 (crtac1), found in Xenopus tropicalis (Western clawed frog).